Here is a 471-residue protein sequence, read N- to C-terminus: Mannose-1-phosphate guanylyltransferase (471 aa).

It belongs to the mannose-6-phosphate isomerase type 2 family.

The catalysed reaction is alpha-D-mannose 1-phosphate + GTP + H(+) = GDP-alpha-D-mannose + diphosphate. It functions in the pathway nucleotide-sugar biosynthesis; GDP-alpha-D-mannose biosynthesis; GDP-alpha-D-mannose from alpha-D-mannose 1-phosphate (GTP route): step 1/1. Involved in GDP-mannose biosynthesis which serves as the activated sugar nucleotide precursor for mannose residues in cell surface polysaccharides. This enzyme participates in synthesis of the LPS O antigen. This Salmonella montevideo protein is Mannose-1-phosphate guanylyltransferase (manC).